The following is a 491-amino-acid chain: Polybrominated aromatic compounds synthase (491 aa).

C437 provides a ligand contact to heme.

Belongs to the cytochrome P450 family. Heme serves as cofactor.

In terms of biological role, cytochrome P450 protein involved in the biosynthesis of polybrominated aromatic organic compounds. In the presence of ferredoxin, ferredoxin reductase and NADH, catalyzes the coupling of bromophenols and bromopyrroles, forming various polybrominated biphenyls and hydroxylated polybrominated diphenyl ethers (OH-BDE). Can also mediate the heterocoupling of 3,5-dibromocatechol. Can also use chlorinated phenolic substrates. 2,3,4-tribromopyrrole could be the physiological substrate. The protein is Polybrominated aromatic compounds synthase of Pseudoalteromonas luteoviolacea (strain 2ta16).